Here is a 525-residue protein sequence, read N- to C-terminus: Bifunctional purine biosynthesis protein PurH (525 aa).

An MGS-like domain is found at 1-149; that stretch reads MSDPVIKRAL…KNNESVTVVT (149 aa).

It belongs to the PurH family.

The enzyme catalyses (6R)-10-formyltetrahydrofolate + 5-amino-1-(5-phospho-beta-D-ribosyl)imidazole-4-carboxamide = 5-formamido-1-(5-phospho-D-ribosyl)imidazole-4-carboxamide + (6S)-5,6,7,8-tetrahydrofolate. The catalysed reaction is IMP + H2O = 5-formamido-1-(5-phospho-D-ribosyl)imidazole-4-carboxamide. It participates in purine metabolism; IMP biosynthesis via de novo pathway; 5-formamido-1-(5-phospho-D-ribosyl)imidazole-4-carboxamide from 5-amino-1-(5-phospho-D-ribosyl)imidazole-4-carboxamide (10-formyl THF route): step 1/1. It functions in the pathway purine metabolism; IMP biosynthesis via de novo pathway; IMP from 5-formamido-1-(5-phospho-D-ribosyl)imidazole-4-carboxamide: step 1/1. The polypeptide is Bifunctional purine biosynthesis protein PurH (Pelodictyon phaeoclathratiforme (strain DSM 5477 / BU-1)).